Reading from the N-terminus, the 264-residue chain is Thymidylate synthase (264 aa).

Arg21 lines the dUMP pocket. His51 is a (6R)-5,10-methylene-5,6,7,8-tetrahydrofolate binding site. Position 126–127 (126–127) interacts with dUMP; sequence RR. The active-site Nucleophile is Cys146. Residues 166-169, Asn177, and 207-209 contribute to the dUMP site; these read RSCD and HLY. Residue Asp169 coordinates (6R)-5,10-methylene-5,6,7,8-tetrahydrofolate. (6R)-5,10-methylene-5,6,7,8-tetrahydrofolate is bound at residue Ala263.

This sequence belongs to the thymidylate synthase family. Bacterial-type ThyA subfamily. As to quaternary structure, homodimer.

Its subcellular location is the cytoplasm. The catalysed reaction is dUMP + (6R)-5,10-methylene-5,6,7,8-tetrahydrofolate = 7,8-dihydrofolate + dTMP. The protein operates within pyrimidine metabolism; dTTP biosynthesis. Its function is as follows. Catalyzes the reductive methylation of 2'-deoxyuridine-5'-monophosphate (dUMP) to 2'-deoxythymidine-5'-monophosphate (dTMP) while utilizing 5,10-methylenetetrahydrofolate (mTHF) as the methyl donor and reductant in the reaction, yielding dihydrofolate (DHF) as a by-product. This enzymatic reaction provides an intracellular de novo source of dTMP, an essential precursor for DNA biosynthesis. The polypeptide is Thymidylate synthase (Shewanella sp. (strain ANA-3)).